Reading from the N-terminus, the 614-residue chain is Leucine aminopeptidase 2 (614 aa).

Residues 139–141 (QCQ) and 271–276 (PYGGME) contribute to the a peptide site. Histidine 300 is a Zn(2+) binding site. Glutamate 301 (proton acceptor) is an active-site residue. Positions 304 and 323 each coordinate Zn(2+). Residue tyrosine 385 is the Proton donor of the active site.

It belongs to the peptidase M1 family. Zn(2+) serves as cofactor.

The protein resides in the cytoplasm. Its subcellular location is the nucleus. It catalyses the reaction an epoxide + H2O = an ethanediol. Its function is as follows. Aminopeptidase that preferentially cleaves di- and tripeptides. Also has low epoxide hydrolase activity (in vitro). Can hydrolyze the epoxide leukotriene LTA(4) but it forms preferentially 5,6-dihydroxy-7,9,11,14-eicosatetraenoic acid rather than the cytokine leukotriene B(4) as the product compared to the homologous mammalian enzyme (in vitro). The polypeptide is Leucine aminopeptidase 2 (Aspergillus fumigatus (strain ATCC MYA-4609 / CBS 101355 / FGSC A1100 / Af293) (Neosartorya fumigata)).